The following is a 248-amino-acid chain: Aspartate/glutamate leucyltransferase (248 aa).

This sequence belongs to the R-transferase family. Bpt subfamily.

Its subcellular location is the cytoplasm. The enzyme catalyses N-terminal L-glutamyl-[protein] + L-leucyl-tRNA(Leu) = N-terminal L-leucyl-L-glutamyl-[protein] + tRNA(Leu) + H(+). It catalyses the reaction N-terminal L-aspartyl-[protein] + L-leucyl-tRNA(Leu) = N-terminal L-leucyl-L-aspartyl-[protein] + tRNA(Leu) + H(+). In terms of biological role, functions in the N-end rule pathway of protein degradation where it conjugates Leu from its aminoacyl-tRNA to the N-termini of proteins containing an N-terminal aspartate or glutamate. The polypeptide is Aspartate/glutamate leucyltransferase (Methylorubrum populi (strain ATCC BAA-705 / NCIMB 13946 / BJ001) (Methylobacterium populi)).